Reading from the N-terminus, the 192-residue chain is Lipid A acyltransferase PagP (192 aa).

A signal peptide spans 1-29; it reads MVVNVVIVAKKYFLFITLLIIQVSLPAHA. Active-site residues include histidine 64, aspartate 107, and serine 108.

The protein belongs to the lipid A palmitoyltransferase family. Homodimer.

It is found in the cell outer membrane. The catalysed reaction is a lipid A + a 1,2-diacyl-sn-glycero-3-phosphocholine = a hepta-acyl lipid A + a 2-acyl-sn-glycero-3-phosphocholine. It carries out the reaction a lipid IVA + a 1,2-diacyl-sn-glycero-3-phosphocholine = a lipid IVB + a 2-acyl-sn-glycero-3-phosphocholine. The enzyme catalyses a lipid IIA + a 1,2-diacyl-sn-glycero-3-phosphocholine = a lipid IIB + a 2-acyl-sn-glycero-3-phosphocholine. Transfers a fatty acid residue from the sn-1 position of a phospholipid to the N-linked hydroxyfatty acid chain on the proximal unit of lipid A or its precursors. This chain is Lipid A acyltransferase PagP, found in Citrobacter rodentium (strain ICC168) (Citrobacter freundii biotype 4280).